Consider the following 370-residue polypeptide: UDP-N-acetylglucosamine--N-acetylmuramyl-(pentapeptide) pyrophosphoryl-undecaprenol N-acetylglucosamine transferase (370 aa).

UDP-N-acetyl-alpha-D-glucosamine-binding positions include 10-12 (TGG), N124, R166, S198, I252, and Q297.

The protein belongs to the glycosyltransferase 28 family. MurG subfamily.

Its subcellular location is the cell membrane. The catalysed reaction is di-trans,octa-cis-undecaprenyl diphospho-N-acetyl-alpha-D-muramoyl-L-alanyl-D-glutamyl-meso-2,6-diaminopimeloyl-D-alanyl-D-alanine + UDP-N-acetyl-alpha-D-glucosamine = di-trans,octa-cis-undecaprenyl diphospho-[N-acetyl-alpha-D-glucosaminyl-(1-&gt;4)]-N-acetyl-alpha-D-muramoyl-L-alanyl-D-glutamyl-meso-2,6-diaminopimeloyl-D-alanyl-D-alanine + UDP + H(+). Its pathway is cell wall biogenesis; peptidoglycan biosynthesis. Cell wall formation. Catalyzes the transfer of a GlcNAc subunit on undecaprenyl-pyrophosphoryl-MurNAc-pentapeptide (lipid intermediate I) to form undecaprenyl-pyrophosphoryl-MurNAc-(pentapeptide)GlcNAc (lipid intermediate II). The polypeptide is UDP-N-acetylglucosamine--N-acetylmuramyl-(pentapeptide) pyrophosphoryl-undecaprenol N-acetylglucosamine transferase (Finegoldia magna (strain ATCC 29328 / DSM 20472 / WAL 2508) (Peptostreptococcus magnus)).